Here is a 110-residue protein sequence, read N- to C-terminus: Snake venom vascular endothelial growth factor toxin ICPP (110 aa).

Gln1 bears the Pyrrolidone carboxylic acid mark. Disulfide bonds link Cys14-Cys56, Cys45-Cys91, and Cys49-Cys93.

Homodimer; disulfide-linked. Interacts with high affinity with KDR/VEGFR-2, and with a lower affinity with neuropilin-1 (NRP1) and neuropilin-2 (NRP2). In terms of tissue distribution, expressed by the venom gland.

It localises to the secreted. Its function is as follows. Snake venom VEGFs may contribute to venom dispersion and prey subjugation by inducing vascular permeability and hypotension. This protein increases vascular permeability and angiogenesis probably through VEGF receptor (KDR/VEGFR-2) signaling. Induces DNA synthesis in human umbilical vein endothelial cells, and promotes mouse embryonic stem cell proliferation and differentiation. It may also induce a drastic hypotensive effect after intravenous injection. The hypotension is mediated by nitric oxide (NO), which is produced by VEGF-activated endothelium NO synthase. The sequence is that of Snake venom vascular endothelial growth factor toxin ICPP from Macrovipera lebetinus (Levantine viper).